The following is a 311-amino-acid chain: Apolipoprotein E (311 aa).

Positions 1 to 18 (MKVWWAVLAAAILAGCRA) are cleaved as a signal peptide. A run of 8 repeats spans residues 74–95 (MLMEETMKEVKAYKSELEEQLS), 96–116 (PMAQEHRARLSKELQVAGALE), 117–138 (ADMEDVCNRLAQYRGEAQAMLG), 139–160 (QSTEELARAFSSHLRKLRKRLL), 161–182 (RDAEDLQKRMAVYGAGAREGAE), 183–204 (RGVSAVRERLGSRLERGRLRVA), 205–226 (TVGTLAGRPLRERAQAWGERLR), and 227–248 (GHLEEVGSRARDRLNEVREQVE). Positions 74 to 248 (MLMEETMKEV…RLNEVREQVE (175 aa)) are 8 X 22 AA approximate tandem repeats. Met136 carries the post-translational modification Methionine sulfoxide. Ser140 is subject to Phosphoserine. Residues 151–161 (HLRKLRKRLLR) are LDL and other lipoprotein receptors binding. 155 to 158 (LRKR) is a binding site for heparin. The tract at residues 203–283 (VATVGTLAGR…SWFEPLVEDM (81 aa)) is lipid-binding and lipoprotein association. Thr205 carries an O-linked (GalNAc...) threonine glycan. Residue 222–229 (GERLRGHL) coordinates heparin. Residues 259-311 (PQMRLQAEAFQARLKSWFEPLVEDMQRQWAGLVEKLQAAMPSKAPAAAPIENQ) form a homooligomerization region. A specificity for association with VLDL region spans residues 271–283 (RLKSWFEPLVEDM).

It belongs to the apolipoprotein A1/A4/E family. In terms of assembly, homotetramer. May interact with ABCA1; functionally associated with ABCA1 in the biogenesis of HDLs. May interact with APP/A4 amyloid-beta peptide; the interaction is extremely stable in vitro but its physiological significance is unclear. May interact with MAPT. May interact with MAP2. In the cerebrospinal fluid, interacts with secreted SORL1. Interacts with PMEL; this allows the loading of PMEL luminal fragment on ILVs to induce fibril nucleation. In terms of processing, APOE exists as multiple glycosylated and sialylated glycoforms within cells and in plasma. The extent of glycosylation and sialylation are tissue and context specific. Post-translationally, glycated in plasma VLDL. Phosphorylated by FAM20C in the extracellular medium.

It localises to the secreted. It is found in the extracellular space. The protein localises to the extracellular matrix. The protein resides in the extracellular vesicle. Its subcellular location is the endosome. It localises to the multivesicular body. Functionally, APOE is an apolipoprotein, a protein associating with lipid particles, that mainly functions in lipoprotein-mediated lipid transport between organs via the plasma and interstitial fluids. APOE is a core component of plasma lipoproteins and is involved in their production, conversion and clearance. Apolipoproteins are amphipathic molecules that interact both with lipids of the lipoprotein particle core and the aqueous environment of the plasma. As such, APOE associates with chylomicrons, chylomicron remnants, very low density lipoproteins (VLDL) and intermediate density lipoproteins (IDL) but shows a preferential binding to high-density lipoproteins (HDL). It also binds a wide range of cellular receptors including the LDL receptor/LDLR and the very low-density lipoprotein receptor/VLDLR that mediate the cellular uptake of the APOE-containing lipoprotein particles. Finally, APOE also has a heparin-binding activity and binds heparan-sulfate proteoglycans on the surface of cells, a property that supports the capture and the receptor-mediated uptake of APOE-containing lipoproteins by cells. The polypeptide is Apolipoprotein E (APOE) (Oryctolagus cuniculus (Rabbit)).